Here is a 180-residue protein sequence, read N- to C-terminus: ATP-dependent protease subunit HslV (180 aa).

T5 is a catalytic residue. Residues G165, C168, and T171 each contribute to the Na(+) site.

The protein belongs to the peptidase T1B family. HslV subfamily. As to quaternary structure, a double ring-shaped homohexamer of HslV is capped on each side by a ring-shaped HslU homohexamer. The assembly of the HslU/HslV complex is dependent on binding of ATP.

The protein localises to the cytoplasm. The enzyme catalyses ATP-dependent cleavage of peptide bonds with broad specificity.. Its activity is regulated as follows. Allosterically activated by HslU binding. Its function is as follows. Protease subunit of a proteasome-like degradation complex believed to be a general protein degrading machinery. This is ATP-dependent protease subunit HslV from Helicobacter pylori (strain ATCC 700392 / 26695) (Campylobacter pylori).